The sequence spans 810 residues: Myoneurin (810 aa).

Positions 24–91 (CDCTVSIGQA…IYTGDLNMDR (68 aa)) constitute a BTB domain. Disordered regions lie at residues 122–146 (NVGS…DYEP) and 169–466 (VSMD…VKPV). Positions 173–183 (EAQSSSEQTPQ) are enriched in polar residues. Composition is skewed to basic residues over residues 185-194 (VGKRGRKPKT) and 211-225 (GRGR…RPRV). Positions 229 to 238 (SSDSTDQSPA) are enriched in polar residues. Residues 243 to 253 (SPNGSSTSRGS) show a composition bias toward low complexity. A DNA-binding region (a.T hook 1) is located at residues 254–266 (GRPRGRPRVRPLS). Residues 270–308 (EDPRNVEDDPAANKDQEVEKGNEEQKKETGEKDDGKNDT) are compositionally biased toward basic and acidic residues. Positions 318 to 330 (KRGRGRPRIKPVS) form a DNA-binding region, a.T hook 2. Polar residues predominate over residues 331–346 (TEDQTTNSENVTTNAE). Over residues 350-361 (EPAKTKDSEGTG) the composition is skewed to basic and acidic residues. A DNA-binding region (a.T hook 3) is located at residues 361 to 373 (GRKRGRPRSKPVS). Residues 386 to 396 (SGEEAGEETSQ) show a composition bias toward acidic residues. Residues 419 to 428 (ISKRKRILSR) are compositionally biased toward basic residues. Residues 428 to 432 (RKLKE) carry the Nuclear localization signal motif. Residues 435–460 (AGDEEEEEEEEMDDEFENDNEDWAGE) are compositionally biased toward acidic residues. 7 consecutive C2H2-type zinc fingers follow at residues 472–494 (PICN…MRIH), 500–522 (YQCT…MRIH), 528–551 (FTCT…RMHH), 557–579 (YKCE…IRKH), 585–607 (YECG…KRRH), 613–635 (YICD…NRKH), and 641–663 (YICL…MDVH).

Belongs to the krueppel C2H2-type zinc-finger protein family.

The protein resides in the nucleus. This chain is Myoneurin (mynn), found in Danio rerio (Zebrafish).